Consider the following 445-residue polypeptide: Glutamate--tRNA ligase 2 (445 aa).

Residues 10–20 carry the 'HIGH' region motif; that stretch reads PSPTGRLHVGN. The short motif at 241–245 is the 'KMSKS' region element; that stretch reads ALSKR. Lysine 244 lines the ATP pocket.

The protein belongs to the class-I aminoacyl-tRNA synthetase family. Glutamate--tRNA ligase type 1 subfamily. Monomer.

It is found in the cytoplasm. It catalyses the reaction tRNA(Glu) + L-glutamate + ATP = L-glutamyl-tRNA(Glu) + AMP + diphosphate. Catalyzes the attachment of glutamate to tRNA(Glu) in a two-step reaction: glutamate is first activated by ATP to form Glu-AMP and then transferred to the acceptor end of tRNA(Glu). In Hyphomonas neptunium (strain ATCC 15444), this protein is Glutamate--tRNA ligase 2.